The following is a 521-amino-acid chain: Lipid-translocating exporter-like protein RTA1 (521 aa).

Transmembrane regions (helical) follow at residues 186–206 (GAPI…SWQC), 211–231 (AWKL…GYAL), 249–269 (LALF…LELA), 292–312 (VTAF…SGVS), 332–352 (LVAL…SVLF), 371–391 (TLMT…FRLV), and 418–438 (EAYF…LWNV). Residues 493 to 521 (THSQPQELYENPNGNGHKKFRLGNGGRAT) form a disordered region.

Belongs to the lipid-translocating exporter (LTE) (TC 9.A.26.1) family.

The protein resides in the membrane. Lipid-translocating exporter-like protein; part of the gene cluster that mediates the biosynthesis of phomenoic acid, a long chain aliphatic carboxylic acid that does not appear to be essential for pathogenicity but may play a role in allowing to outcompete other fungi in the environmental niche via its antifungal properties. This is Lipid-translocating exporter-like protein RTA1 from Leptosphaeria maculans (strain JN3 / isolate v23.1.3 / race Av1-4-5-6-7-8) (Blackleg fungus).